Here is a 680-residue protein sequence, read N- to C-terminus: Dipeptidyl carboxypeptidase (680 aa).

A Zn(2+)-binding site is contributed by H469. E470 is an active-site residue. The Zn(2+) site is built by H473 and H476.

This sequence belongs to the peptidase M3 family. The cofactor is Zn(2+).

Its subcellular location is the cytoplasm. The enzyme catalyses Hydrolysis of unblocked, C-terminal dipeptides from oligopeptides, with broad specificity. Does not hydrolyze bonds in which P1' is Pro, or both P1 and P1' are Gly.. In terms of biological role, removes dipeptides from the C-termini of N-blocked tripeptides, tetrapeptides and larger peptides. The polypeptide is Dipeptidyl carboxypeptidase (dcp) (Salmonella typhimurium (strain LT2 / SGSC1412 / ATCC 700720)).